The primary structure comprises 345 residues: S-adenosylmethionine:tRNA ribosyltransferase-isomerase (345 aa).

This sequence belongs to the QueA family. In terms of assembly, monomer.

It is found in the cytoplasm. The enzyme catalyses 7-aminomethyl-7-carbaguanosine(34) in tRNA + S-adenosyl-L-methionine = epoxyqueuosine(34) in tRNA + adenine + L-methionine + 2 H(+). It participates in tRNA modification; tRNA-queuosine biosynthesis. In terms of biological role, transfers and isomerizes the ribose moiety from AdoMet to the 7-aminomethyl group of 7-deazaguanine (preQ1-tRNA) to give epoxyqueuosine (oQ-tRNA). In Lactococcus lactis subsp. lactis (strain IL1403) (Streptococcus lactis), this protein is S-adenosylmethionine:tRNA ribosyltransferase-isomerase.